The following is a 428-amino-acid chain: Serine hydroxymethyltransferase (428 aa).

Residues Leu117 and 121–123 (GHL) contribute to the (6S)-5,6,7,8-tetrahydrofolate site. The residue at position 226 (Lys226) is an N6-(pyridoxal phosphate)lysine.

It belongs to the SHMT family. As to quaternary structure, homodimer. It depends on pyridoxal 5'-phosphate as a cofactor.

It is found in the cytoplasm. The catalysed reaction is (6R)-5,10-methylene-5,6,7,8-tetrahydrofolate + glycine + H2O = (6S)-5,6,7,8-tetrahydrofolate + L-serine. The protein operates within one-carbon metabolism; tetrahydrofolate interconversion. Its pathway is amino-acid biosynthesis; glycine biosynthesis; glycine from L-serine: step 1/1. Catalyzes the reversible interconversion of serine and glycine with tetrahydrofolate (THF) serving as the one-carbon carrier. This reaction serves as the major source of one-carbon groups required for the biosynthesis of purines, thymidylate, methionine, and other important biomolecules. Also exhibits THF-independent aldolase activity toward beta-hydroxyamino acids, producing glycine and aldehydes, via a retro-aldol mechanism. The sequence is that of Serine hydroxymethyltransferase from Aquifex aeolicus (strain VF5).